We begin with the raw amino-acid sequence, 211 residues long: Small ribosomal subunit protein uS3 (211 aa).

Residues 38-106 (LRNFLKKRLF…EIYLNIQEVR (69 aa)) enclose the KH type-2 domain.

It belongs to the universal ribosomal protein uS3 family. As to quaternary structure, part of the 30S ribosomal subunit. Forms a tight complex with proteins S10 and S14.

Binds the lower part of the 30S subunit head. Binds mRNA in the 70S ribosome, positioning it for translation. This chain is Small ribosomal subunit protein uS3, found in Geobacter metallireducens (strain ATCC 53774 / DSM 7210 / GS-15).